The sequence spans 453 residues: Zinc finger and BTB domain-containing protein 44 (453 aa).

A Glycyl lysine isopeptide (Lys-Gly) (interchain with G-Cter in SUMO2) cross-link involves residue K4. Residues 31–98 (CDITIRVQDK…AYTATLSINT (68 aa)) form the BTB domain. The residue at position 135 (S135) is a Phosphoserine. Residues 135–157 (SQPEKSLDAGQENSSNCNFTSRD) are disordered. Residues 145-157 (QENSSNCNFTSRD) show a composition bias toward polar residues. Phosphoserine is present on residues S159, S161, S165, S191, S194, and S199. Residue T200 is modified to Phosphothreonine. The segment at 241–266 (QPEKAKQAENTRTLELPGPSEAGRRV) is disordered. A Glycyl lysine isopeptide (Lys-Gly) (interchain with G-Cter in SUMO2) cross-link involves residue K290. 2 disordered regions span residues 295–324 (SDEE…PGSE) and 336–366 (SSSI…ADDD). Residues 304–318 (SQPVSASQSSLSDQQ) show a composition bias toward low complexity. Residues 352–361 (TLQSTSSTNA) are compositionally biased toward polar residues. C2H2-type zinc fingers lie at residues 399-421 (FQCP…MLIH) and 427-449 (FQCD…RLKH).

It localises to the nucleus. In Mus musculus (Mouse), this protein is Zinc finger and BTB domain-containing protein 44 (Zbtb44).